Here is a 464-residue protein sequence, read N- to C-terminus: UDP-N-acetylmuramate--L-alanine ligase (464 aa).

ATP is bound at residue 111–117 (GAHGKTT).

This sequence belongs to the MurCDEF family.

The protein resides in the cytoplasm. It catalyses the reaction UDP-N-acetyl-alpha-D-muramate + L-alanine + ATP = UDP-N-acetyl-alpha-D-muramoyl-L-alanine + ADP + phosphate + H(+). It participates in cell wall biogenesis; peptidoglycan biosynthesis. Functionally, cell wall formation. In Dictyoglomus turgidum (strain DSM 6724 / Z-1310), this protein is UDP-N-acetylmuramate--L-alanine ligase.